Here is a 215-residue protein sequence, read N- to C-terminus: Formate dehydrogenase subunit beta (215 aa).

The 30-residue stretch at lysine 3 to proline 32 folds into the 4Fe-4S ferredoxin-type 1 domain. [4Fe-4S] cluster-binding residues include cysteine 12, cysteine 15, cysteine 18, cysteine 22, cysteine 73, cysteine 76, cysteine 81, cysteine 121, cysteine 138, cysteine 141, cysteine 153, and cysteine 157. In terms of domain architecture, 4Fe-4S ferredoxin-type 2 spans valine 129–serine 168.

In terms of assembly, heterodimer of alpha (FdhA) and beta (FdhB) subunits. [4Fe-4S] cluster is required as a cofactor.

It localises to the periplasm. In terms of biological role, beta chain of the formate dehydrogenase (FDH) catalyzes the reversible two-electron oxidation of formate to carbon dioxide. FDH loses activity in the presence of air, but this activity can be restored. This chain is an electron transfer unit. This Megalodesulfovibrio gigas (strain ATCC 19364 / DSM 1382 / NCIMB 9332 / VKM B-1759) (Desulfovibrio gigas) protein is Formate dehydrogenase subunit beta.